Reading from the N-terminus, the 329-residue chain is uncharacterized protein (329 aa).

2 coiled-coil regions span residues 57 to 120 and 225 to 251; these read KKEE…QEVT and QRQR…GNMM.

This is an uncharacterized protein from Homo sapiens (Human).